Consider the following 299-residue polypeptide: Phosphoribosylaminoimidazole-succinocarboxamide synthase (299 aa).

It belongs to the SAICAR synthetase family.

The enzyme catalyses 5-amino-1-(5-phospho-D-ribosyl)imidazole-4-carboxylate + L-aspartate + ATP = (2S)-2-[5-amino-1-(5-phospho-beta-D-ribosyl)imidazole-4-carboxamido]succinate + ADP + phosphate + 2 H(+). It functions in the pathway purine metabolism; IMP biosynthesis via de novo pathway; 5-amino-1-(5-phospho-D-ribosyl)imidazole-4-carboxamide from 5-amino-1-(5-phospho-D-ribosyl)imidazole-4-carboxylate: step 1/2. The polypeptide is Phosphoribosylaminoimidazole-succinocarboxamide synthase (ade7) (Schizosaccharomyces pombe (strain 972 / ATCC 24843) (Fission yeast)).